Here is a 124-residue protein sequence, read N- to C-terminus: uncharacterized protein (124 aa).

A disordered region spans residues 1 to 65 (MAENSRYVRL…RPASSSNPDY (65 aa)). Over residues 37-47 (LNSNDAESQQV) the composition is skewed to polar residues.

This is an uncharacterized protein from Microplitis demolitor (Parasitoid wasp).